Here is a 628-residue protein sequence, read N- to C-terminus: U-box domain-containing protein 10 (628 aa).

The U-box domain occupies 242-316 (TIPEDFLCPI…SQWCTKHNIE (75 aa)). ARM repeat units follow at residues 373–413 (TDNR…NLSI), 415–454 (EHNK…SLSL), 456–495 (DENK…NLCI), 497–537 (QGNK…VLAS), and 539–578 (QVAK…CLCK).

The enzyme catalyses S-ubiquitinyl-[E2 ubiquitin-conjugating enzyme]-L-cysteine + [acceptor protein]-L-lysine = [E2 ubiquitin-conjugating enzyme]-L-cysteine + N(6)-ubiquitinyl-[acceptor protein]-L-lysine.. It functions in the pathway protein modification; protein ubiquitination. Functionally, functions as an E3 ubiquitin ligase. This is U-box domain-containing protein 10 (PUB10) from Arabidopsis thaliana (Mouse-ear cress).